Here is a 373-residue protein sequence, read N- to C-terminus: tRNA-specific 2-thiouridylase MnmA (373 aa).

ATP contacts are provided by residues Gly-12–Ser-19 and Met-38. Residues Asn-98–Asp-100 are interaction with target base in tRNA. The Nucleophile role is filled by Cys-103. Cys-103 and Cys-200 are oxidised to a cystine. ATP is bound at residue Gly-127. Residues Lys-150–Gln-152 are interaction with tRNA. The active-site Cysteine persulfide intermediate is Cys-200. The interval Arg-312–Tyr-313 is interaction with tRNA.

It belongs to the MnmA/TRMU family.

It is found in the cytoplasm. The enzyme catalyses S-sulfanyl-L-cysteinyl-[protein] + uridine(34) in tRNA + AH2 + ATP = 2-thiouridine(34) in tRNA + L-cysteinyl-[protein] + A + AMP + diphosphate + H(+). Its function is as follows. Catalyzes the 2-thiolation of uridine at the wobble position (U34) of tRNA, leading to the formation of s(2)U34. This Streptococcus uberis (strain ATCC BAA-854 / 0140J) protein is tRNA-specific 2-thiouridylase MnmA.